We begin with the raw amino-acid sequence, 122 residues long: Large ribosomal subunit protein uL14 (122 aa).

This sequence belongs to the universal ribosomal protein uL14 family. Part of the 50S ribosomal subunit. Forms a cluster with proteins L3 and L19. In the 70S ribosome, L14 and L19 interact and together make contacts with the 16S rRNA in bridges B5 and B8.

Its function is as follows. Binds to 23S rRNA. Forms part of two intersubunit bridges in the 70S ribosome. This Ectopseudomonas mendocina (strain ymp) (Pseudomonas mendocina) protein is Large ribosomal subunit protein uL14.